Reading from the N-terminus, the 379-residue chain is Putative F-box protein At2g33190 (379 aa).

The 48-residue stretch at 6 to 53 (NGWSKLYPDLLRSIFESLSCLDFHRAGTVCSNWYAVSRSCPLYPWRIV) folds into the F-box domain.

In Arabidopsis thaliana (Mouse-ear cress), this protein is Putative F-box protein At2g33190.